Here is a 304-residue protein sequence, read N- to C-terminus: CRISPR-associated endonuclease Cas1 (304 aa).

The Mn(2+) site is built by Glu-148, His-204, and Glu-219.

Belongs to the CRISPR-associated endonuclease Cas1 family. As to quaternary structure, homodimer, forms a heterotetramer with a Cas2 homodimer. It depends on Mg(2+) as a cofactor. Mn(2+) serves as cofactor.

Functionally, CRISPR (clustered regularly interspaced short palindromic repeat), is an adaptive immune system that provides protection against mobile genetic elements (viruses, transposable elements and conjugative plasmids). CRISPR clusters contain spacers, sequences complementary to antecedent mobile elements, and target invading nucleic acids. CRISPR clusters are transcribed and processed into CRISPR RNA (crRNA). Acts as a dsDNA endonuclease. Involved in the integration of spacer DNA into the CRISPR cassette. This chain is CRISPR-associated endonuclease Cas1, found in Neisseria meningitidis serogroup C (strain 8013).